The chain runs to 345 residues: uncharacterized protein (345 aa).

This is an uncharacterized protein from Saccharomyces cerevisiae (strain ATCC 204508 / S288c) (Baker's yeast).